The sequence spans 265 residues: MLKSSPLHSASVASGLLKCFLGAHPLLPATYEKCGLTTSCRRSTTIHSPAKIWQPPSCRYFSKSRPILSPLPETSEQSSPSYLSTANKPPGTDEQGLKSDRGDINSDSKSTSKTSRSKKSNVPRSSKSTTQKREKPEKPRELEPWQIQKQALKKKFPEGWNPRKRLHPDTLDTIRHLHQQDPNIYSTPALAQEFKVSPEAIRRILKSKWQPTPEVAAERRERWEKRRKRIWNQLSEIGVRPHRPSFADVSDTKVLEKKRRTVGSK.

Residues 1–68 constitute a mitochondrion transit peptide; it reads MLKSSPLHSA…RYFSKSRPIL (68 aa). Residues 69-167 form a disordered region; it reads SPLPETSEQS…EGWNPRKRLH (99 aa). Residues 72 to 87 are compositionally biased toward polar residues; that stretch reads PETSEQSSPSYLSTAN. Composition is skewed to basic and acidic residues over residues 95 to 106 and 131 to 143; these read QGLKSDRGDINS and QKREKPEKPRELE.

This sequence belongs to the RRG9 family.

The protein resides in the mitochondrion. Required for respiratory activity and maintenance and expression of the mitochondrial genome. The polypeptide is Required for respiratory growth protein 9, mitochondrial (RRG9) (Blastomyces gilchristii (strain SLH14081) (Blastomyces dermatitidis)).